The following is a 355-amino-acid chain: Probable nitronate monooxygenase (355 aa).

FMN is bound by residues Asn71, Gln175, Gly180, Gly218, and 237–240; that span reads QMGT.

Belongs to the nitronate monooxygenase family. NMO class I subfamily. FMN is required as a cofactor.

The catalysed reaction is 3 propionate 3-nitronate + 3 O2 + H2O = 3 3-oxopropanoate + 2 nitrate + nitrite + H2O2 + 3 H(+). Nitronate monooxygenase that uses molecular oxygen to catalyze the oxidative denitrification of alkyl nitronates. Acts on propionate 3-nitronate (P3N), the presumed physiological substrate. Probably functions in the detoxification of P3N, a metabolic poison produced by plants and fungi as a defense mechanism. The chain is Probable nitronate monooxygenase from Staphylococcus aureus (strain JH1).